A 165-amino-acid chain; its full sequence is uncharacterized protein (165 aa).

Positions 1-17 are cleaved as a signal peptide; the sequence is MIRGFFLILLFLLLAFF.

This is an uncharacterized protein from Aquifex aeolicus (strain VF5).